A 95-amino-acid chain; its full sequence is uncharacterized protein (95 aa).

A helical membrane pass occupies residues 45–65; it reads WLSGLAFVLQAALVMPVVLAF.

Its subcellular location is the membrane. This is an uncharacterized protein from Mycobacterium leprae (strain TN).